Consider the following 186-residue polypeptide: dCTP deaminase (186 aa).

107–112 (KSTYAR) lines the dCTP pocket. Glu133 serves as the catalytic Proton donor/acceptor. Residues Gln152, Tyr166, and Gln176 each coordinate dCTP.

This sequence belongs to the dCTP deaminase family. As to quaternary structure, homotrimer.

It carries out the reaction dCTP + H2O + H(+) = dUTP + NH4(+). The protein operates within pyrimidine metabolism; dUMP biosynthesis; dUMP from dCTP (dUTP route): step 1/2. Its function is as follows. Catalyzes the deamination of dCTP to dUTP. The chain is dCTP deaminase from Campylobacter concisus (strain 13826).